The primary structure comprises 248 residues: 23S rRNA (guanosine-2'-O-)-methyltransferase RlmB (248 aa).

Residues Gly-200, Ile-220, and Leu-229 each contribute to the S-adenosyl-L-methionine site.

The protein belongs to the class IV-like SAM-binding methyltransferase superfamily. RNA methyltransferase TrmH family. RlmB subfamily.

Its subcellular location is the cytoplasm. It carries out the reaction guanosine(2251) in 23S rRNA + S-adenosyl-L-methionine = 2'-O-methylguanosine(2251) in 23S rRNA + S-adenosyl-L-homocysteine + H(+). Specifically methylates the ribose of guanosine 2251 in 23S rRNA. This chain is 23S rRNA (guanosine-2'-O-)-methyltransferase RlmB, found in Acinetobacter baylyi (strain ATCC 33305 / BD413 / ADP1).